Consider the following 361-residue polypeptide: MSKRAFNFCAGPAALPDAVLQRAQAELLDWRGKGLSVMEMSHRSDDYVAIASKAEQDLRDLLDIPSDYKVLFLQGGASQQFAEIPLNLLPEDGVADYIDTGIWSKKAIEEARRYGTVNVAASAKEYDYFAIPGQNEWTLTKDAAYVHYASNETIGGLEFDWIPETGDVPLVTDMSSDILSRPLDVSRFGLIYAGAQKNIGPSGLVVVIVREDLLGRARSVCPTMLNYKTAADNGSMYNTPATYSWYLSGLVFEWLKEQGGVTAMEQRNRAKKDLLYKTIDASDFYTNPIQPSARSWMNVPFRLADERLDKPFLEGAEARGLLNLKGHRSVGGMRASIYNALGLDAVEALVAYMAEFEKEHG.

An L-glutamate-binding site is contributed by arginine 43. Residues 77 to 78, tryptophan 103, threonine 153, aspartate 173, and glutamine 196 each bind pyridoxal 5'-phosphate; that span reads AS. At lysine 197 the chain carries N6-(pyridoxal phosphate)lysine. Residue 238-239 participates in pyridoxal 5'-phosphate binding; sequence NT.

Belongs to the class-V pyridoxal-phosphate-dependent aminotransferase family. SerC subfamily. Homodimer. Pyridoxal 5'-phosphate serves as cofactor.

It is found in the cytoplasm. It catalyses the reaction O-phospho-L-serine + 2-oxoglutarate = 3-phosphooxypyruvate + L-glutamate. The enzyme catalyses 4-(phosphooxy)-L-threonine + 2-oxoglutarate = (R)-3-hydroxy-2-oxo-4-phosphooxybutanoate + L-glutamate. It functions in the pathway amino-acid biosynthesis; L-serine biosynthesis; L-serine from 3-phospho-D-glycerate: step 2/3. Its pathway is cofactor biosynthesis; pyridoxine 5'-phosphate biosynthesis; pyridoxine 5'-phosphate from D-erythrose 4-phosphate: step 3/5. Catalyzes the reversible conversion of 3-phosphohydroxypyruvate to phosphoserine and of 3-hydroxy-2-oxo-4-phosphonooxybutanoate to phosphohydroxythreonine. This is Phosphoserine aminotransferase from Pseudomonas aeruginosa (strain ATCC 15692 / DSM 22644 / CIP 104116 / JCM 14847 / LMG 12228 / 1C / PRS 101 / PAO1).